Reading from the N-terminus, the 128-residue chain is uncharacterized protein (128 aa).

A helical membrane pass occupies residues 8–28 (YQAIYLIFAGFTVFGLLLHFY).

It is found in the membrane. This is an uncharacterized protein from Haemophilus influenzae (strain ATCC 51907 / DSM 11121 / KW20 / Rd).